The sequence spans 474 residues: Protein U79/U80 (474 aa).

Composition is skewed to basic and acidic residues over residues 156–165 (DRKKHDDEHR) and 175–219 (RKVE…KRQK). Disordered regions lie at residues 156–219 (DRKK…KRQK) and 412–441 (SGQN…SRTQ). The span at 417 to 432 (GRARGRGRGRAPRRRN) shows a compositional bias: basic residues.

The protein belongs to the herpesviridae U79/UL112 family.

The protein localises to the host nucleus. In terms of biological role, may be involved in DNA replication. The sequence is that of Protein U79/U80 (U79/U80) from Homo sapiens (Human).